We begin with the raw amino-acid sequence, 3658 residues long: Serine/threonine-protein kinase SMG1 (3658 aa).

Disordered stretches follow at residues 1 to 99 (MSRR…TYGR) and 116 to 142 (FTSV…MSYS). Over residues 24-33 (NDWQPRTDSA) the composition is skewed to polar residues. 2 stretches are compositionally biased toward basic and acidic residues: residues 67–84 (QRHD…DEKG) and 127–136 (ATKDMRKSQE). Residue Lys171 is modified to N6-acetyllysine. In terms of domain architecture, FAT spans 1281–1864 (RELQKSIEVQ…LYPAIVGTIS (584 aa)). Residues 1815-1850 (APWRGIIPQLFSRLNHPEVYVRQSICNLLCRVAQDS) form an HEAT repeat. The interval 1896-1917 (ECEGGSPPASQDSNKDEPKSGL) is disordered. The PI3K/PI4K catalytic domain occupies 2122 to 2461 (VGGTITILPT…MEREITRSLF (340 aa)). Residues 2128–2134 (ILPTKTK) form a G-loop region. Positions 2330–2338 (GLGDRHLDN) are catalytic loop. Positions 2350 to 2374 (HIDYNVCFEKGKSLRVPEKVPFRMT) are activation loop. At Thr3547 the chain carries Phosphothreonine. Residues Ser3553 and Ser3567 each carry the phosphoserine modification. Residues 3565-3576 (ATSADTPPSTIP) are compositionally biased toward polar residues. The disordered stretch occupies residues 3565–3588 (ATSADTPPSTIPGTGKSIACSPKK). Residues Thr3570 and Thr3574 each carry the phosphothreonine modification. Positions 3626 to 3658 (RRMSVAEQVDYVIKEATNLDNLAQLYEGWTAWV) constitute an FATC domain.

This sequence belongs to the PI3/PI4-kinase family. Component of the SMG1C complex composed of SMG1, SMG8 and SMG9; the recruitment of SMG8 to SMG1 N-terminus induces a large conformational change in the SMG1 C-terminal head domain containing the catalytic domain. Component of the transient SURF (SMG1-UPF1-eRF1-eRF3) complex. Part of a complex composed of SMG1, DHX34 and UPF1; within the complex DHX34 acts as a scaffolding protein to facilitate SMG1 phosphorylation of UPF1. Interacts with PRKCI. Interacts with TELO2 and TTI1. Interacts with RUVBL1 and RUVBL2. Interacts with DHX34 (via C-terminus); the interaction is RNA-independent. Requires Mn(2+) as cofactor. In terms of processing, autophosphorylated.

Its subcellular location is the nucleus. The protein localises to the cytoplasm. It catalyses the reaction L-seryl-[protein] + ATP = O-phospho-L-seryl-[protein] + ADP + H(+). The enzyme catalyses L-threonyl-[protein] + ATP = O-phospho-L-threonyl-[protein] + ADP + H(+). Inhibited by caffeine, LY294002 and wortmannin. Its function is as follows. Serine/threonine protein kinase involved in both mRNA surveillance and genotoxic stress response pathways. Recognizes the substrate consensus sequence [ST]-Q. Plays a central role in nonsense-mediated decay (NMD) of mRNAs containing premature stop codons by phosphorylating UPF1/RENT1. Recruited by release factors to stalled ribosomes together with SMG8 and SMG9 (forming the SMG1C protein kinase complex), and UPF1 to form the transient SURF (SMG1-UPF1-eRF1-eRF3) complex. In EJC-dependent NMD, the SURF complex associates with the exon junction complex (EJC) through UPF2 and allows the formation of an UPF1-UPF2-UPF3 surveillance complex which is believed to activate NMD. Also acts as a genotoxic stress-activated protein kinase that displays some functional overlap with ATM. Can phosphorylate p53/TP53 and is required for optimal p53/TP53 activation after cellular exposure to genotoxic stress. Its depletion leads to spontaneous DNA damage and increased sensitivity to ionizing radiation (IR). May activate PRKCI but not PRKCZ. The chain is Serine/threonine-protein kinase SMG1 from Mus musculus (Mouse).